The sequence spans 260 residues: 4-hydroxy-tetrahydrodipicolinate reductase (260 aa).

NAD(+) is bound by residues 12 to 17, 92 to 94, and 118 to 121; these read GFRGKM, GTT, and APNF. The active-site Proton donor/acceptor is the His148. A (S)-2,3,4,5-tetrahydrodipicolinate-binding site is contributed by His149. Lys152 functions as the Proton donor in the catalytic mechanism. Residue 158 to 159 coordinates (S)-2,3,4,5-tetrahydrodipicolinate; it reads GT.

This sequence belongs to the DapB family.

It localises to the cytoplasm. The catalysed reaction is (S)-2,3,4,5-tetrahydrodipicolinate + NAD(+) + H2O = (2S,4S)-4-hydroxy-2,3,4,5-tetrahydrodipicolinate + NADH + H(+). It catalyses the reaction (S)-2,3,4,5-tetrahydrodipicolinate + NADP(+) + H2O = (2S,4S)-4-hydroxy-2,3,4,5-tetrahydrodipicolinate + NADPH + H(+). It participates in amino-acid biosynthesis; L-lysine biosynthesis via DAP pathway; (S)-tetrahydrodipicolinate from L-aspartate: step 4/4. Functionally, catalyzes the conversion of 4-hydroxy-tetrahydrodipicolinate (HTPA) to tetrahydrodipicolinate. The protein is 4-hydroxy-tetrahydrodipicolinate reductase of Lactococcus lactis subsp. cremoris (strain SK11).